Consider the following 372-residue polypeptide: Delta-type opioid receptor (372 aa).

Residues Met-1–Ala-47 are Extracellular-facing. Asn-18 and Asn-33 each carry an N-linked (GlcNAc...) asparagine glycan. A helical transmembrane segment spans residues Leu-48 to Val-75. The Cytoplasmic segment spans residues Arg-76–Asn-85. Residues Ile-86 to Leu-110 form a helical membrane-spanning segment. The Extracellular portion of the chain corresponds to Met-111–Lys-122. The cysteines at positions 121 and 198 are disulfide-linked. A helical transmembrane segment spans residues Ala-123–Val-144. Residues Asp-145 to Ala-163 lie on the Cytoplasmic side of the membrane. The helical transmembrane segment at Lys-164 to Met-186 threads the bilayer. Residues Ala-187–Ser-206 are Extracellular-facing. The chain crosses the membrane as a helical span at residues Trp-207–Leu-238. The Cytoplasmic segment spans residues Arg-239–Arg-261. The helical transmembrane segment at Met-262–Trp-284 threads the bilayer. Residues Thr-285 to Ala-299 are Extracellular-facing. Residues Leu-300–Leu-321 traverse the membrane as a helical segment. Topologically, residues Asp-322–Ala-372 are cytoplasmic. Residue Cys-333 is the site of S-palmitoyl cysteine attachment. The tract at residues Pro-340–Ala-372 is disordered. The segment covering Arg-347–Val-357 has biased composition (basic and acidic residues).

Belongs to the G-protein coupled receptor 1 family. May form homooligomers. Forms a heterodimer with OPRM1. Interacts with GPRASP1. Interacts with RTP4; the interaction promotes cell surface localization of the OPRD1-OPRM1 heterodimer. N-glycosylated. Post-translationally, ubiquitinated. A basal ubiquitination seems not to be related to degradation. Ubiquitination is increased upon formation of OPRM1:OPRD1 oligomers leading to proteasomal degradation; the ubiquitination is diminished by RTP4. As to expression, detected in oocytes (at protein level). Detected in brain cortex, hypothalamus, hippocampus and olfactory bulb. Detected in oocytes.

The protein resides in the cell membrane. G-protein coupled receptor that functions as a receptor for endogenous enkephalins and for a subset of other opioids. Ligand binding causes a conformation change that triggers signaling via guanine nucleotide-binding proteins (G proteins) and modulates the activity of down-stream effectors, such as adenylate cyclase. Signaling leads to the inhibition of adenylate cyclase activity. Inhibits neurotransmitter release by reducing calcium ion currents and increasing potassium ion conductance. Plays a role in the perception of pain and in opiate-mediated analgesia. Plays a role in developing analgesic tolerance to morphine. The protein is Delta-type opioid receptor (OPRD1) of Homo sapiens (Human).